Consider the following 426-residue polypeptide: Dihydroorotase (426 aa).

2 residues coordinate Zn(2+): His61 and His63. Residues His63–Arg65 and Asn95 each bind substrate. Zn(2+) contacts are provided by Glu146, His180, His229, and Asp297. Residue Asp297 is part of the active site. His301 contributes to the substrate binding site.

Belongs to the metallo-dependent hydrolases superfamily. DHOase family. Class I DHOase subfamily. Zn(2+) serves as cofactor.

It catalyses the reaction (S)-dihydroorotate + H2O = N-carbamoyl-L-aspartate + H(+). The protein operates within pyrimidine metabolism; UMP biosynthesis via de novo pathway; (S)-dihydroorotate from bicarbonate: step 3/3. Functionally, catalyzes the reversible cyclization of carbamoyl aspartate to dihydroorotate. The chain is Dihydroorotase from Methanopyrus kandleri (strain AV19 / DSM 6324 / JCM 9639 / NBRC 100938).